We begin with the raw amino-acid sequence, 329 residues long: tRNA N6-adenosine threonylcarbamoyltransferase (329 aa).

Fe cation-binding residues include His-108, His-112, and Tyr-129. Residues 129–133, Asp-161, Glu-182, and Ser-261 each bind substrate; that span reads YVSGG. Asp-289 is a Fe cation binding site.

The protein belongs to the KAE1 / TsaD family. Fe(2+) serves as cofactor.

It localises to the cytoplasm. The enzyme catalyses L-threonylcarbamoyladenylate + adenosine(37) in tRNA = N(6)-L-threonylcarbamoyladenosine(37) in tRNA + AMP + H(+). Required for the formation of a threonylcarbamoyl group on adenosine at position 37 (t(6)A37) in tRNAs that read codons beginning with adenine. Is probably involved in the transfer of the threonylcarbamoyl moiety of threonylcarbamoyl-AMP (TC-AMP) to the N6 group of A37. The protein is tRNA N6-adenosine threonylcarbamoyltransferase of Ignicoccus hospitalis (strain KIN4/I / DSM 18386 / JCM 14125).